Consider the following 121-residue polypeptide: Fumarate reductase subunit D (121 aa).

Transmembrane regions (helical) follow at residues 22–42 (GVWF…LLPL), 57–77 (AFVS…LPMW), and 100–120 (YACY…VIQL).

The protein belongs to the FrdD family. Part of an enzyme complex containing four subunits: a flavoprotein (FrdA), an iron-sulfur protein (FrdB), and two hydrophobic anchor proteins (FrdC and FrdD).

It localises to the cell inner membrane. Its function is as follows. Anchors the catalytic components of the fumarate reductase complex to the cell membrane, binds quinones. In Shewanella putrefaciens (strain CN-32 / ATCC BAA-453), this protein is Fumarate reductase subunit D.